The sequence spans 788 residues: Protein kintoun (788 aa).

3 disordered regions span residues 194–249 (LRKP…SEQD), 415–438 (NNSE…EISP), and 628–754 (HKEH…SSSV). A compositionally biased stretch (basic and acidic residues) spans 225-241 (GKEKKDQKRVIKEEHKQ). Residues 417 to 427 (SEGLTSESNLD) show a composition bias toward polar residues. Basic and acidic residues-rich tracts occupy residues 628–644 (HKEH…DVGV) and 667–682 (ENTE…RYEE). 2 stretches are compositionally biased toward polar residues: residues 685–701 (STSC…QKDS) and 744–754 (NFDSRPASSSV).

This sequence belongs to the PIH1 family. Kintoun subfamily.

The protein localises to the cytoplasm. It is found in the dynein axonemal particle. Its function is as follows. Required for cytoplasmic pre-assembly of axonemal dyneins, thereby playing a central role in motility in cilia and flagella. Involved in pre-assembly of dynein arm complexes in the cytoplasm before intraflagellar transport loads them for the ciliary compartment. This chain is Protein kintoun, found in Xenopus laevis (African clawed frog).